A 346-amino-acid chain; its full sequence is Methionine import ATP-binding protein MetN 1 (346 aa).

In terms of domain architecture, ABC transporter spans I2–V241. ATP is bound at residue G38–S45.

It belongs to the ABC transporter superfamily. Methionine importer (TC 3.A.1.24) family. As to quaternary structure, the complex is composed of two ATP-binding proteins (MetN), two transmembrane proteins (MetI) and a solute-binding protein (MetQ).

Its subcellular location is the cell membrane. It catalyses the reaction L-methionine(out) + ATP + H2O = L-methionine(in) + ADP + phosphate + H(+). It carries out the reaction D-methionine(out) + ATP + H2O = D-methionine(in) + ADP + phosphate + H(+). Its function is as follows. Part of the ABC transporter complex MetNIQ involved in methionine import. Responsible for energy coupling to the transport system. The sequence is that of Methionine import ATP-binding protein MetN 1 from Bacillus cereus (strain ZK / E33L).